The chain runs to 459 residues: Protein FAM90A27P (459 aa).

Over residues 1–10 the composition is skewed to basic residues; it reads MARHSVHHQA. Disordered regions lie at residues 1–41, 74–136, 153–239, and 259–459; these read MARH…ESRV, SHKE…WKEP, HTTK…ALQP, and PDAD…SDSD. The segment covering 125-136 has biased composition (basic and acidic residues); that stretch reads PQEKMQEAWKEP. The span at 184 to 194 shows a compositional bias: polar residues; that stretch reads HNDSPQLSTCG. Over residues 341 to 353 the composition is skewed to low complexity; the sequence is KATAETAATKTAT. Positions 415-427 are enriched in polar residues; the sequence is PPENSASAQSPRF.

Belongs to the FAM90 family.

The chain is Protein FAM90A27P (FAM90A27P) from Homo sapiens (Human).